A 344-amino-acid chain; its full sequence is Biotin synthase (344 aa).

Residues 40–267 (AQVQVSTLLS…KSMVRLSAGR (228 aa)) enclose the Radical SAM core domain. Positions 55, 59, and 62 each coordinate [4Fe-4S] cluster. Positions 99, 130, 190, and 262 each coordinate [2Fe-2S] cluster.

Belongs to the radical SAM superfamily. Biotin synthase family. In terms of assembly, homodimer. Requires [4Fe-4S] cluster as cofactor. [2Fe-2S] cluster is required as a cofactor.

The enzyme catalyses (4R,5S)-dethiobiotin + (sulfur carrier)-SH + 2 reduced [2Fe-2S]-[ferredoxin] + 2 S-adenosyl-L-methionine = (sulfur carrier)-H + biotin + 2 5'-deoxyadenosine + 2 L-methionine + 2 oxidized [2Fe-2S]-[ferredoxin]. It functions in the pathway cofactor biosynthesis; biotin biosynthesis; biotin from 7,8-diaminononanoate: step 2/2. Its function is as follows. Catalyzes the conversion of dethiobiotin (DTB) to biotin by the insertion of a sulfur atom into dethiobiotin via a radical-based mechanism. The protein is Biotin synthase of Xanthomonas axonopodis pv. citri (strain 306).